The following is a 71-amino-acid chain: UPF0435 protein BLi00816/BL03111 (71 aa).

This sequence belongs to the UPF0435 family.

The polypeptide is UPF0435 protein BLi00816/BL03111 (Bacillus licheniformis (strain ATCC 14580 / DSM 13 / JCM 2505 / CCUG 7422 / NBRC 12200 / NCIMB 9375 / NCTC 10341 / NRRL NRS-1264 / Gibson 46)).